The chain runs to 305 residues: Methionyl-tRNA formyltransferase (305 aa).

108-111 (SLLP) provides a ligand contact to (6S)-5,6,7,8-tetrahydrofolate.

Belongs to the Fmt family.

It carries out the reaction L-methionyl-tRNA(fMet) + (6R)-10-formyltetrahydrofolate = N-formyl-L-methionyl-tRNA(fMet) + (6S)-5,6,7,8-tetrahydrofolate + H(+). Attaches a formyl group to the free amino group of methionyl-tRNA(fMet). The formyl group appears to play a dual role in the initiator identity of N-formylmethionyl-tRNA by promoting its recognition by IF2 and preventing the misappropriation of this tRNA by the elongation apparatus. The polypeptide is Methionyl-tRNA formyltransferase (Thermus thermophilus (strain ATCC BAA-163 / DSM 7039 / HB27)).